A 320-amino-acid chain; its full sequence is Nucleoporin Nup37 (320 aa).

WD repeat units lie at residues 67–113, 118–157, 160–200, and 203–242; these read KEQR…FTSL, GHGDYVNDVSWVCDGELLASVSDDFTCRFWTTTGGGENVI, GLSS…TVIS, and SPKFPLMSADWAHSNRLFITSLAGGDVVTWDLNRPYVPAD.

Its subcellular location is the nucleus. The protein localises to the nuclear pore complex. As part of the nuclear pore complex (NPC), has a role in its assembly and function. In terms of biological role, (Microbial infection) Required for optimal replication of E.chaffeensis. The protein is Nucleoporin Nup37 of Drosophila melanogaster (Fruit fly).